We begin with the raw amino-acid sequence, 178 residues long: ATP-dependent protease subunit HslV (178 aa).

Thr7 is an active-site residue. Residues Gly162, Cys165, and Thr168 each contribute to the Na(+) site.

This sequence belongs to the peptidase T1B family. HslV subfamily. As to quaternary structure, a double ring-shaped homohexamer of HslV is capped on each side by a ring-shaped HslU homohexamer. The assembly of the HslU/HslV complex is dependent on binding of ATP.

It is found in the cytoplasm. The enzyme catalyses ATP-dependent cleavage of peptide bonds with broad specificity.. With respect to regulation, allosterically activated by HslU binding. In terms of biological role, protease subunit of a proteasome-like degradation complex believed to be a general protein degrading machinery. The protein is ATP-dependent protease subunit HslV of Burkholderia multivorans (strain ATCC 17616 / 249).